A 473-amino-acid polypeptide reads, in one-letter code: Argininosuccinate lyase (473 aa).

Belongs to the lyase 1 family. Argininosuccinate lyase subfamily.

It localises to the cytoplasm. It catalyses the reaction 2-(N(omega)-L-arginino)succinate = fumarate + L-arginine. The protein operates within amino-acid biosynthesis; L-arginine biosynthesis; L-arginine from L-ornithine and carbamoyl phosphate: step 3/3. The chain is Argininosuccinate lyase from Mycobacteroides abscessus (strain ATCC 19977 / DSM 44196 / CCUG 20993 / CIP 104536 / JCM 13569 / NCTC 13031 / TMC 1543 / L948) (Mycobacterium abscessus).